A 469-amino-acid chain; its full sequence is Aspartyl/glutamyl-tRNA(Asn/Gln) amidotransferase subunit B (469 aa).

Belongs to the GatB/GatE family. GatB subfamily. In terms of assembly, heterotrimer of A, B and C subunits.

It carries out the reaction L-glutamyl-tRNA(Gln) + L-glutamine + ATP + H2O = L-glutaminyl-tRNA(Gln) + L-glutamate + ADP + phosphate + H(+). The enzyme catalyses L-aspartyl-tRNA(Asn) + L-glutamine + ATP + H2O = L-asparaginyl-tRNA(Asn) + L-glutamate + ADP + phosphate + 2 H(+). In terms of biological role, allows the formation of correctly charged Asn-tRNA(Asn) or Gln-tRNA(Gln) through the transamidation of misacylated Asp-tRNA(Asn) or Glu-tRNA(Gln) in organisms which lack either or both of asparaginyl-tRNA or glutaminyl-tRNA synthetases. The reaction takes place in the presence of glutamine and ATP through an activated phospho-Asp-tRNA(Asn) or phospho-Glu-tRNA(Gln). In Methanococcus aeolicus (strain ATCC BAA-1280 / DSM 17508 / OCM 812 / Nankai-3), this protein is Aspartyl/glutamyl-tRNA(Asn/Gln) amidotransferase subunit B.